A 232-amino-acid chain; its full sequence is Beta-casein (232 aa).

The signal sequence occupies residues 1 to 15 (MKVLILACRVALALA). Residues Ser-30, Ser-32, Ser-33, and Ser-34 each carry the phosphoserine modification.

This sequence belongs to the beta-casein family. In terms of tissue distribution, mammary gland specific. Secreted in milk.

It localises to the secreted. In terms of biological role, important role in determination of the surface properties of the casein micelles. This Camelus dromedarius (Dromedary) protein is Beta-casein (CSN2).